The sequence spans 233 residues: B-cell lymphoma/leukemia 10 (233 aa).

Residue M1 is modified to N-acetylmethionine. Positions 13 to 101 (LTEVKKDALE…QNFLIQKITD (89 aa)) constitute a CARD domain. Residues K17, K31, and K63 each participate in a glycyl lysine isopeptide (Lys-Gly) (interchain with G-Cter in ubiquitin) cross-link. A compositionally biased stretch (polar residues) spans 130–141 (TNNLSRSNSDES). Disordered regions lie at residues 130-149 (TNNLSRSNSDESNFSEKQRP) and 186-233 (SFSS…LSRQ). The residue at position 138 (S138) is a Phosphoserine. Pro residues predominate over residues 195–205 (PGDPGAPPLPP).

In terms of assembly, homomultimer; homooligomerized following recruitment by CARD domain-containing proteins that form a nucleating helical template that recruits BCL10 via CARD-CARD interaction. Self-associates by CARD-CARD interaction and interacts with other CARD-proteins such as CARD9, CARD10, CARD11 and CARD14. Forms a complex with CARD14 and MALT1; resulting in the formation of a CBM (CARD14-BCL10-MALT1) complex. Forms a complex with CARD11 and MALT1; resulting in the formation of a CBM (CARD11-BCL10-MALT1) complex. Forms a complex with CARD9 and MALT1; resulting in the formation of a CBM (CARD9-BCL10-MALT1) complex. Found in a membrane raft complex, at least composed of BCL10, CARD11, DPP4 and IKBKB. Binds caspase-9 with its C-terminal domain. Interacts with TRAF2 and BIRC2/c-IAP2. Interacts with PELI2 and SOCS3; these interactions may be mutually exclusive. Phosphorylated. Phosphorylation results in dissociation from TRAF2 and binding to BIRC2/c-IAP2. Phosphorylated by IKBKB/IKKB. In terms of processing, ubiquitinated via both 'Lys-63'-linked and linear ('Met-1'-linked) polyubiquitin chains in response to T-cell receptor (TCR) activation. Ubiquitination is recognized by IKBKG/NEMO, the regulatory subunit of I-kappa-B kinase (IKK), and is required for TCR-induced NF-kappa-B activation. Linear ubiquitination at Lys-17, Lys-31 and Lys-63 is mediated by RNF31/HOIP; linear ubiquitination is recognized with much higher affinity than 'Lys-63'-linked ubiquitin by IKBKG/NEMO. CARD11 is required for linear ubiquitination by HOIP by promoting the targeting of BCL10 to RNF31/HOIP. Post-translationally, proteolytically cleaved by MALT1; required for T-cell activation.

The protein resides in the cytoplasm. The protein localises to the perinuclear region. Its subcellular location is the membrane raft. Its function is as follows. Plays a key role in both adaptive and innate immune signaling by bridging CARD domain-containing proteins to immune activation. Acts by channeling adaptive and innate immune signaling downstream of CARD domain-containing proteins CARD9, CARD11 and CARD14 to activate NF-kappa-B and MAP kinase p38 (MAPK11, MAPK12, MAPK13 and/or MAPK14) pathways which stimulate expression of genes encoding pro-inflammatory cytokines and chemokines. Recruited by activated CARD domain-containing proteins: homooligomerized CARD domain-containing proteins form a nucleating helical template that recruits BCL10 via CARD-CARD interaction, thereby promoting polymerization of BCL10, subsequent recruitment of MALT1 and formation of a CBM complex. This leads to activation of NF-kappa-B and MAP kinase p38 (MAPK11, MAPK12, MAPK13 and/or MAPK14) pathways which stimulate expression of genes encoding pro-inflammatory cytokines and chemokines. Activated by CARD9 downstream of C-type lectin receptors; CARD9-mediated signals are essential for antifungal immunity. Activated by CARD11 downstream of T-cell receptor (TCR) and B-cell receptor (BCR). Promotes apoptosis, pro-caspase-9 maturation and activation of NF-kappa-B via NIK and IKK. The protein is B-cell lymphoma/leukemia 10 of Rattus norvegicus (Rat).